The sequence spans 264 residues: 3-deoxy-manno-octulosonate cytidylyltransferase (264 aa).

It belongs to the KdsB family.

The protein resides in the cytoplasm. It catalyses the reaction 3-deoxy-alpha-D-manno-oct-2-ulosonate + CTP = CMP-3-deoxy-beta-D-manno-octulosonate + diphosphate. It participates in nucleotide-sugar biosynthesis; CMP-3-deoxy-D-manno-octulosonate biosynthesis; CMP-3-deoxy-D-manno-octulosonate from 3-deoxy-D-manno-octulosonate and CTP: step 1/1. It functions in the pathway bacterial outer membrane biogenesis; lipopolysaccharide biosynthesis. In terms of biological role, activates KDO (a required 8-carbon sugar) for incorporation into bacterial lipopolysaccharide in Gram-negative bacteria. This Marinomonas sp. (strain MWYL1) protein is 3-deoxy-manno-octulosonate cytidylyltransferase.